The sequence spans 300 residues: Hydroxyquinol 1,2-dioxygenase (300 aa).

Tyr167, Tyr200, His224, and His226 together coordinate Fe cation.

It belongs to the intradiol ring-cleavage dioxygenase family. The cofactor is Fe(3+).

The catalysed reaction is benzene-1,2,4-triol + O2 = maleylacetate + 2 H(+). It participates in aromatic compound metabolism. It functions in the pathway xenobiotic degradation. In terms of biological role, involved in the degradation of para-nitrophenol (4-NP). Catalyzes the conversion of hydroxyquinol to malelylacetate. This chain is Hydroxyquinol 1,2-dioxygenase (npcC), found in Rhodococcus opacus (Nocardia opaca).